Consider the following 341-residue polypeptide: uncharacterized protein (341 aa).

It belongs to the Gfo/Idh/MocA family.

This is an uncharacterized protein from Bacillus subtilis (strain 168).